We begin with the raw amino-acid sequence, 1368 residues long: DNA-directed RNA polymerase subunit beta (1368 aa).

It belongs to the RNA polymerase beta chain family. As to quaternary structure, the RNAP catalytic core consists of 2 alpha, 1 beta, 1 beta' and 1 omega subunit. When a sigma factor is associated with the core the holoenzyme is formed, which can initiate transcription.

The catalysed reaction is RNA(n) + a ribonucleoside 5'-triphosphate = RNA(n+1) + diphosphate. Its function is as follows. DNA-dependent RNA polymerase catalyzes the transcription of DNA into RNA using the four ribonucleoside triphosphates as substrates. This is DNA-directed RNA polymerase subunit beta from Cupriavidus taiwanensis (strain DSM 17343 / BCRC 17206 / CCUG 44338 / CIP 107171 / LMG 19424 / R1) (Ralstonia taiwanensis (strain LMG 19424)).